We begin with the raw amino-acid sequence, 617 residues long: Probable potassium transport system protein Kup 3 (617 aa).

Transmembrane regions (helical) follow at residues 42–62 (VASLILWALLLIISLKYALLI), 95–115 (LVVGLVGAALLYGDGAITPAI), 129–149 (PSLAPAVVPVTVVILVGLFMM), 160–180 (IFGPVMLAWFAVLAALGIHGI), 206–226 (VSFAILGAAFLAVTGGEAMYA), 240–260 (WFAICLPALVLNYFGQAALLI), 282–302 (LVAFSAVATVIASQAIISGVF), 330–350 (IYVPLVNWLLAAATLGAVLSF), 360–380 (YGIAVSLLMAITTLLAALVAI), 386–406 (PWLVVAVNGAFFVIDVIFFSA), and 411–431 (LFEGGWFPLLLAALVAFMMLT).

This sequence belongs to the HAK/KUP transporter (TC 2.A.72) family.

It is found in the cell inner membrane. The catalysed reaction is K(+)(in) + H(+)(in) = K(+)(out) + H(+)(out). Transport of potassium into the cell. Likely operates as a K(+):H(+) symporter. This Bradyrhizobium diazoefficiens (strain JCM 10833 / BCRC 13528 / IAM 13628 / NBRC 14792 / USDA 110) protein is Probable potassium transport system protein Kup 3.